The chain runs to 301 residues: Protease HtpX homolog (301 aa).

Helical transmembrane passes span 11 to 31 and 34 to 54; these read VLLLGGMWVVLLAIGWAIAGA and NSAFIMIFAVVGLLGTAYSYW. H138 provides a ligand contact to Zn(2+). Residue E139 is part of the active site. Position 142 (H142) interacts with Zn(2+). 2 helical membrane-spanning segments follow: residues 154–174 and 188–208; these read AAAVAGIITSAAQMLQFAAIF and LVGLLLALLAPLAATVIQLAI. E213 is a Zn(2+) binding site.

Belongs to the peptidase M48B family. The cofactor is Zn(2+).

The protein localises to the cell membrane. This chain is Protease HtpX homolog, found in Kocuria rhizophila (strain ATCC 9341 / DSM 348 / NBRC 103217 / DC2201).